The chain runs to 160 residues: Transcription elongation factor GreA (160 aa).

The stretch at M1–R72 forms a coiled coil.

It belongs to the GreA/GreB family.

Functionally, necessary for efficient RNA polymerase transcription elongation past template-encoded arresting sites. The arresting sites in DNA have the property of trapping a certain fraction of elongating RNA polymerases that pass through, resulting in locked ternary complexes. Cleavage of the nascent transcript by cleavage factors such as GreA or GreB allows the resumption of elongation from the new 3'terminus. GreA releases sequences of 2 to 3 nucleotides. The polypeptide is Transcription elongation factor GreA (Streptococcus pneumoniae serotype 4 (strain ATCC BAA-334 / TIGR4)).